A 189-amino-acid polypeptide reads, in one-letter code: Segregation and condensation protein B (189 aa).

This sequence belongs to the ScpB family. In terms of assembly, homodimer. Homodimerization may be required to stabilize the binding of ScpA to the Smc head domains. Component of a cohesin-like complex composed of ScpA, ScpB and the Smc homodimer, in which ScpA and ScpB bind to the head domain of Smc. The presence of the three proteins is required for the association of the complex with DNA.

Its subcellular location is the cytoplasm. Its function is as follows. Participates in chromosomal partition during cell division. May act via the formation of a condensin-like complex containing Smc and ScpA that pull DNA away from mid-cell into both cell halves. The sequence is that of Segregation and condensation protein B from Streptococcus mitis.